The sequence spans 398 residues: MLEPITSEHIVSENNSLTTQSVNAEQPAVAKINLLDLNRQQLREFFAKMGEKPFRADQVMKWMYHYCCDDFEQMTDINKVLRNKLQSVAEIRAPEVAEEQRSADGTIKWAIKVGDQQVETVYIPDGDRATLCVSSQVGCALECKFCSTAQQGFNRNLRVSEIIGQVWRAAKIIGALKVTGERPITNVVMMGMGEPLLNLNNVVPAMEIMLDDFGFGLSKRRVTLSTSGVVPALDKLGDMIDVALAISLHAPNDKIRDDIVPINRKYNIETFLAAVRRYLAKSNANQGRVTVEYVMLDHINDSTDDAHQLAEVLKDTPCKINLIPWNPFPGAPYGRSSNSRVDRFSKVLMEYGFTTIVRKTRGDDIDAACGQLAGEVIDRTKRTLKKKMAGEPISVRAV.

Residue Glu119 is the Proton acceptor of the active site. One can recognise a Radical SAM core domain in the interval Asp125–Asp364. Residues Cys132 and Cys369 are joined by a disulfide bond. Residues Cys139, Cys143, and Cys146 each contribute to the [4Fe-4S] cluster site. S-adenosyl-L-methionine is bound by residues Gly193–Glu194, Ser225, Ser247–His249, and Asn326. Cys369 acts as the S-methylcysteine intermediate in catalysis.

Belongs to the radical SAM superfamily. RlmN family. It depends on [4Fe-4S] cluster as a cofactor.

Its subcellular location is the cytoplasm. It catalyses the reaction adenosine(2503) in 23S rRNA + 2 reduced [2Fe-2S]-[ferredoxin] + 2 S-adenosyl-L-methionine = 2-methyladenosine(2503) in 23S rRNA + 5'-deoxyadenosine + L-methionine + 2 oxidized [2Fe-2S]-[ferredoxin] + S-adenosyl-L-homocysteine. The enzyme catalyses adenosine(37) in tRNA + 2 reduced [2Fe-2S]-[ferredoxin] + 2 S-adenosyl-L-methionine = 2-methyladenosine(37) in tRNA + 5'-deoxyadenosine + L-methionine + 2 oxidized [2Fe-2S]-[ferredoxin] + S-adenosyl-L-homocysteine. In terms of biological role, specifically methylates position 2 of adenine 2503 in 23S rRNA and position 2 of adenine 37 in tRNAs. m2A2503 modification seems to play a crucial role in the proofreading step occurring at the peptidyl transferase center and thus would serve to optimize ribosomal fidelity. This Serratia proteamaculans (strain 568) protein is Dual-specificity RNA methyltransferase RlmN.